The primary structure comprises 1746 residues: tRNA (32-2'-O)-methyltransferase regulator THADA (1746 aa).

Residues 1252–1286 (EQALAEIRRIVVELKALQLRLKNTEAANTKLNTNV) adopt a coiled-coil conformation.

Belongs to the THADA family. As to quaternary structure, interacts with SERCA. In terms of tissue distribution, detected in the larval fat body, salivary glands and wing imaginal disks (at protein level).

It is found in the endoplasmic reticulum. In terms of biological role, together with methyltransferase Trm7-32, methylates the 2'-O-ribose of nucleotides at position 32 of the anticodon loop of substrate tRNAs. Plays a key role in energy homeostasis by regulating the balance between energy storage and heat production. Functions by negatively regulating Ca(2+) signaling pathways that are involved in heat production and maintaining correct lipid storage in the fat body. Regulates Ca(2+) signaling pathways by reducing the activity of the calcium-transporting ATPase SERCA possibly by promoting uncoupling of SERCA ATP hydrolysis from calcium pumping. May also function in the nervous system to control feeding behavior. This chain is tRNA (32-2'-O)-methyltransferase regulator THADA, found in Drosophila melanogaster (Fruit fly).